We begin with the raw amino-acid sequence, 272 residues long: HMP-PP phosphatase (272 aa).

Asp8 (nucleophile) is an active-site residue. Positions 8, 10, and 212 each coordinate Mg(2+).

It belongs to the HAD-like hydrolase superfamily. Cof family. Requires Mg(2+) as cofactor.

It carries out the reaction 4-amino-2-methyl-5-(diphosphooxymethyl)pyrimidine + H2O = 4-amino-2-methyl-5-(phosphooxymethyl)pyrimidine + phosphate + H(+). Functionally, catalyzes the hydrolysis of 4-amino-2-methyl-5-hydroxymethylpyrimidine pyrophosphate (HMP-PP) to 4-amino-2-methyl-5-hydroxymethylpyrimidine phosphate (HMP-P). The protein is HMP-PP phosphatase of Salmonella schwarzengrund (strain CVM19633).